The sequence spans 177 residues: dCTP deaminase (177 aa).

DCTP-binding positions include 100-105 (RSSIAR) and Asp-116. Residue Glu-126 is the Proton donor/acceptor of the active site. DCTP-binding residues include Tyr-159 and Gln-166.

This sequence belongs to the dCTP deaminase family. Homotrimer.

It carries out the reaction dCTP + H2O + H(+) = dUTP + NH4(+). The protein operates within pyrimidine metabolism; dUMP biosynthesis; dUMP from dCTP (dUTP route): step 1/2. Its function is as follows. Catalyzes the deamination of dCTP to dUTP. This Korarchaeum cryptofilum (strain OPF8) protein is dCTP deaminase.